Consider the following 166-residue polypeptide: Phosphopantetheine adenylyltransferase (166 aa).

Residue serine 8 participates in substrate binding. Residues 8–9 and histidine 16 contribute to the ATP site; that span reads SF. Residues lysine 40, threonine 72, and arginine 86 each contribute to the substrate site. Residues 87–89, glutamate 97, and 122–128 contribute to the ATP site; these read GLR and YSFLSSS.

The protein belongs to the bacterial CoaD family. As to quaternary structure, homohexamer. It depends on Mg(2+) as a cofactor.

Its subcellular location is the cytoplasm. It catalyses the reaction (R)-4'-phosphopantetheine + ATP + H(+) = 3'-dephospho-CoA + diphosphate. The protein operates within cofactor biosynthesis; coenzyme A biosynthesis; CoA from (R)-pantothenate: step 4/5. In terms of biological role, reversibly transfers an adenylyl group from ATP to 4'-phosphopantetheine, yielding dephospho-CoA (dPCoA) and pyrophosphate. The sequence is that of Phosphopantetheine adenylyltransferase from Synechococcus elongatus (strain ATCC 33912 / PCC 7942 / FACHB-805) (Anacystis nidulans R2).